The following is a 256-amino-acid chain: Protein FixA (256 aa).

The protein belongs to the ETF beta-subunit/FixA family. As to quaternary structure, heterodimer of FixA and FixB.

The protein operates within amine and polyamine metabolism; carnitine metabolism. In terms of biological role, required for anaerobic carnitine reduction. May bring reductant to CaiA. This is Protein FixA from Salmonella paratyphi B (strain ATCC BAA-1250 / SPB7).